Reading from the N-terminus, the 360-residue chain is Decorin (360 aa).

The first 16 residues, Met-1 to Ala-16, serve as a signal peptide directing secretion. Residues Gly-17–Glu-30 constitute a propeptide that is removed on maturation. O-linked (Xyl...) (glycosaminoglycan) serine glycosylation occurs at Ser-34. 2 cysteine pairs are disulfide-bonded: Cys-55/Cys-61 and Cys-59/Cys-68. LRR repeat units lie at residues Asp-74–Ile-94, Thr-95–Ile-118, Ser-119–Leu-142, Lys-143–Ile-163, Thr-164–Leu-187, Lys-188–Ile-213, Thr-214–Ile-234, Thr-235–Ile-258, Ser-259–Leu-282, Ile-283–Ile-305, Ser-306–Val-335, and Gln-336–Lys-360. A glycan (N-linked (GlcNAc...) asparagine) is linked at Asn-212. N-linked (GlcNAc...) asparagine glycans are attached at residues Asn-263 and Asn-304. An intrachain disulfide couples Cys-314 to Cys-347.

Belongs to the small leucine-rich proteoglycan (SLRP) family. SLRP class I subfamily. In terms of assembly, binds to type I and type II collagen, fibronectin and TGF-beta. Forms a ternary complex with MFAP2 and ELN. Interacts with DPT. Post-translationally, the attached glycosaminoglycan chain can be either chondroitin sulfate or dermatan sulfate depending upon the tissue of origin.

It is found in the secreted. It localises to the extracellular space. The protein localises to the extracellular matrix. Its function is as follows. May affect the rate of fibrils formation. In Canis lupus familiaris (Dog), this protein is Decorin (DCN).